Reading from the N-terminus, the 329-residue chain is Indolepyruvate C-methyltransferase (329 aa).

It belongs to the methyltransferase superfamily.

It catalyses the reaction indole-3-pyruvate + S-adenosyl-L-methionine = (R)-3-(indol-3-yl)-2-oxobutanoate + S-adenosyl-L-homocysteine + H(+). With respect to regulation, strongly inhibited by the thiol reagents p-chloromercuribenzoate and N-ethylmaleimide. Partially inhibited by o-phenanthroline and 2,2'-dipyridyl. Competitively inhibited by L-tryptophan and indolmycin. Involved in the biosynthesis of the antibiotic indolmycin, an inhibitor of the bacterial tryptophan-tRNA synthetases. Catalyzes the transfer of a methyl group from S-adenosyl-L-methionine to position 3 of the aliphatic side chain of (indol-3-yl)pyruvate to yield 3-methylindolepyruvate. This Streptomyces griseus protein is Indolepyruvate C-methyltransferase.